The primary structure comprises 528 residues: Probable serine/threonine-protein kinase DDB_G0282417 (528 aa).

The span at 49 to 77 (NNNNNNNNNNNNNNNNNNNNNNNNNNKNN) shows a compositional bias: low complexity. Residues 49-84 (NNNNNNNNNNNNNNNNNNNNNNNNNNKNNNDGDDAA) are disordered. Positions 136–466 (QQNRVLIGEG…ESLINNHQYS (331 aa)) constitute a Protein kinase domain. Residues 142 to 150 (IGEGHYGKV) and K166 each bind ATP. D266 serves as the catalytic Proton acceptor.

The protein belongs to the protein kinase superfamily. Ser/Thr protein kinase family.

The enzyme catalyses L-seryl-[protein] + ATP = O-phospho-L-seryl-[protein] + ADP + H(+). It carries out the reaction L-threonyl-[protein] + ATP = O-phospho-L-threonyl-[protein] + ADP + H(+). The protein is Probable serine/threonine-protein kinase DDB_G0282417 of Dictyostelium discoideum (Social amoeba).